We begin with the raw amino-acid sequence, 565 residues long: Augmin complex subunit dgt3 (565 aa).

Coiled coils occupy residues glutamate 135 to alanine 171 and glutamine 212 to tyrosine 241.

The protein belongs to the HAUS3 family. Component of the augmin complex composed of dgt2, dgt3, dgt4, dgt5, dgt6, msd1, msd5 and wac. The complex interacts directly or indirectly with microtubules and is required for centrosome-independent generation of spindle microtubules.

It is found in the cytoplasm. The protein localises to the cytoskeleton. Its subcellular location is the spindle. In terms of biological role, as part of the augmin complex, plays a role in centrosome-independent generation of spindle microtubules. The complex is required for mitotic spindle assembly through its involvement in localizing gamma-tubulin to spindle microtubules. The chain is Augmin complex subunit dgt3 from Drosophila melanogaster (Fruit fly).